Here is a 161-residue protein sequence, read N- to C-terminus: 6,7-dimethyl-8-ribityllumazine synthase (161 aa).

5-amino-6-(D-ribitylamino)uracil-binding positions include tryptophan 26, 58–60, and 81–83; these read SFE and VVI. (2S)-2-hydroxy-3-oxobutyl phosphate is bound at residue 86–87; sequence GT. Catalysis depends on histidine 89, which acts as the Proton donor. Phenylalanine 114 contributes to the 5-amino-6-(D-ribitylamino)uracil binding site. A (2S)-2-hydroxy-3-oxobutyl phosphate-binding site is contributed by arginine 128.

The protein belongs to the DMRL synthase family.

It carries out the reaction (2S)-2-hydroxy-3-oxobutyl phosphate + 5-amino-6-(D-ribitylamino)uracil = 6,7-dimethyl-8-(1-D-ribityl)lumazine + phosphate + 2 H2O + H(+). The protein operates within cofactor biosynthesis; riboflavin biosynthesis; riboflavin from 2-hydroxy-3-oxobutyl phosphate and 5-amino-6-(D-ribitylamino)uracil: step 1/2. Functionally, catalyzes the formation of 6,7-dimethyl-8-ribityllumazine by condensation of 5-amino-6-(D-ribitylamino)uracil with 3,4-dihydroxy-2-butanone 4-phosphate. This is the penultimate step in the biosynthesis of riboflavin. The chain is 6,7-dimethyl-8-ribityllumazine synthase from Streptomyces avermitilis (strain ATCC 31267 / DSM 46492 / JCM 5070 / NBRC 14893 / NCIMB 12804 / NRRL 8165 / MA-4680).